A 207-amino-acid chain; its full sequence is Probable GTP-binding protein EngB (207 aa).

The EngB-type G domain occupies 22-193 (RVPEIVFAGR…LAHFDHYLSG (172 aa)). GTP-binding positions include 30–37 (GRSNVGKS), 57–61 (GKTRL), 75–78 (DIPG), 142–145 (TKDD), and 172–174 (YSS). Residues Ser37 and Thr59 each coordinate Mg(2+).

The protein belongs to the TRAFAC class TrmE-Era-EngA-EngB-Septin-like GTPase superfamily. EngB GTPase family. It depends on Mg(2+) as a cofactor.

Necessary for normal cell division and for the maintenance of normal septation. The sequence is that of Probable GTP-binding protein EngB from Chlorobium luteolum (strain DSM 273 / BCRC 81028 / 2530) (Pelodictyon luteolum).